We begin with the raw amino-acid sequence, 366 residues long: tRNA(Met) cytidine acetate ligase (366 aa).

Residues 7-20 (VAEFNPFHYGHKYL), G96, N152, and R175 contribute to the ATP site.

Belongs to the TmcAL family.

It localises to the cytoplasm. It carries out the reaction cytidine(34) in elongator tRNA(Met) + acetate + ATP = N(4)-acetylcytidine(34) in elongator tRNA(Met) + AMP + diphosphate. In terms of biological role, catalyzes the formation of N(4)-acetylcytidine (ac(4)C) at the wobble position of elongator tRNA(Met), using acetate and ATP as substrates. First activates an acetate ion to form acetyladenylate (Ac-AMP) and then transfers the acetyl group to tRNA to form ac(4)C34. In Streptococcus uberis (strain ATCC BAA-854 / 0140J), this protein is tRNA(Met) cytidine acetate ligase.